Reading from the N-terminus, the 317-residue chain is Zinc finger protein CRM3 (317 aa).

Low complexity predominate over residues 1-15; the sequence is MNFSLSKQSSEKQSS. Residues 1–22 are disordered; sequence MNFSLSKQSSEKQSSYTDKSRS. 2 C2H2-type zinc fingers span residues 254 to 276 and 282 to 306; these read KQCP…YLIH and FKCT…LKSH.

It is found in the nucleus. Its function is as follows. Probable transcription factor involved in the regulation of the transcription of genes involved in cell rescue and defense, as well as cell cycle and DNA processing. The sequence is that of Zinc finger protein CRM3 from Saccharomyces cerevisiae (strain ATCC 204508 / S288c) (Baker's yeast).